Consider the following 1402-residue polypeptide: DNA-directed RNA polymerase subunit beta' (1402 aa).

Residues cysteine 71, cysteine 73, cysteine 86, and cysteine 89 each coordinate Zn(2+). Mg(2+) contacts are provided by aspartate 462, aspartate 464, and aspartate 466. Residues cysteine 811, cysteine 885, cysteine 892, and cysteine 895 each contribute to the Zn(2+) site. The segment at 1379 to 1402 (RKGTGAGSANQMLQDMTDQVPAAE) is disordered. Positions 1385–1395 (GSANQMLQDMT) are enriched in polar residues.

The protein belongs to the RNA polymerase beta' chain family. The RNAP catalytic core consists of 2 alpha, 1 beta, 1 beta' and 1 omega subunit. When a sigma factor is associated with the core the holoenzyme is formed, which can initiate transcription. It depends on Mg(2+) as a cofactor. Zn(2+) serves as cofactor.

The enzyme catalyses RNA(n) + a ribonucleoside 5'-triphosphate = RNA(n+1) + diphosphate. Functionally, DNA-dependent RNA polymerase catalyzes the transcription of DNA into RNA using the four ribonucleoside triphosphates as substrates. This Agrobacterium fabrum (strain C58 / ATCC 33970) (Agrobacterium tumefaciens (strain C58)) protein is DNA-directed RNA polymerase subunit beta'.